The following is a 219-amino-acid chain: Phosphatidylserine decarboxylase proenzyme (219 aa).

The Schiff-base intermediate with substrate; via pyruvic acid role is filled by Ser-188. Ser-188 is modified (pyruvic acid (Ser); by autocatalysis).

Belongs to the phosphatidylserine decarboxylase family. PSD-A subfamily. Heterodimer of a large membrane-associated beta subunit and a small pyruvoyl-containing alpha subunit. Pyruvate is required as a cofactor. In terms of processing, is synthesized initially as an inactive proenzyme. Formation of the active enzyme involves a self-maturation process in which the active site pyruvoyl group is generated from an internal serine residue via an autocatalytic post-translational modification. Two non-identical subunits are generated from the proenzyme in this reaction, and the pyruvate is formed at the N-terminus of the alpha chain, which is derived from the carboxyl end of the proenzyme. The post-translation cleavage follows an unusual pathway, termed non-hydrolytic serinolysis, in which the side chain hydroxyl group of the serine supplies its oxygen atom to form the C-terminus of the beta chain, while the remainder of the serine residue undergoes an oxidative deamination to produce ammonia and the pyruvoyl prosthetic group on the alpha chain.

Its subcellular location is the cell membrane. The enzyme catalyses a 1,2-diacyl-sn-glycero-3-phospho-L-serine + H(+) = a 1,2-diacyl-sn-glycero-3-phosphoethanolamine + CO2. The protein operates within phospholipid metabolism; phosphatidylethanolamine biosynthesis; phosphatidylethanolamine from CDP-diacylglycerol: step 2/2. Its function is as follows. Catalyzes the formation of phosphatidylethanolamine (PtdEtn) from phosphatidylserine (PtdSer). The polypeptide is Phosphatidylserine decarboxylase proenzyme (Geobacter sp. (strain M21)).